Reading from the N-terminus, the 467-residue chain is D-hydantoinase (467 aa).

3 residues coordinate Zn(2+): H65, H67, and K156. At K156 the chain carries N6-carboxylysine. Position 161 (Y161) interacts with substrate. Zn(2+) is bound by residues H189 and H245. Residue S294 participates in substrate binding. Zn(2+) is bound at residue D321. N343 contributes to the substrate binding site.

The protein belongs to the metallo-dependent hydrolases superfamily. Hydantoinase/dihydropyrimidinase family. As to quaternary structure, homotetramer. The cofactor is Zn(2+). Post-translationally, carboxylation allows a single lysine to coordinate two zinc ions.

Its function is as follows. Catalyzes the stereospecific hydrolysis of the cyclic amide bond of D-hydantoin derivatives. The protein is D-hydantoinase (hyuA) of Streptomyces coelicolor (strain ATCC BAA-471 / A3(2) / M145).